Reading from the N-terminus, the 93-residue chain is Defensin-like protein 229 (93 aa).

A signal peptide spans 1 to 19; the sequence is MKSTTLFMVSCVLIFCVLS. Cystine bridges form between Cys38–Cys93, Cys48–Cys72, Cys56–Cys84, and Cys70–Cys86.

The protein belongs to the DEFL family. Flower buds.

The protein localises to the secreted. The chain is Defensin-like protein 229 (SCRL27) from Arabidopsis thaliana (Mouse-ear cress).